The primary structure comprises 147 residues: Transthyretin (147 aa).

The signal sequence occupies residues 1–20 (MASLRLFLLCLAGLVFVSEA). Residue cysteine 30 is modified to Sulfocysteine. Lysine 35 serves as a coordination point for L-thyroxine. Glutamate 62 carries the post-translational modification 4-carboxyglutamate. The residue at position 72 (serine 72) is a Phosphoserine. An L-thyroxine-binding site is contributed by glutamate 74. N-linked (GlcNAc...) asparagine glycosylation occurs at asparagine 118. Serine 137 serves as a coordination point for L-thyroxine.

Belongs to the transthyretin family. In terms of assembly, homotetramer. Dimer of dimers. In the homotetramer, subunits assemble around a central channel that can accommodate two ligand molecules. Interacts with RBP4. Post-translationally, sulfonation of the reactive cysteine Cys-30 enhances the stability of the native conformation of TTR, avoiding misassembly of the protein leading to amyloid formation. In terms of tissue distribution, detected in plasma (at protein level). Detected in liver.

The protein resides in the secreted. Thyroid hormone-binding protein. Probably transports thyroxine from the bloodstream to the brain. This Mus musculus (Mouse) protein is Transthyretin (Ttr).